We begin with the raw amino-acid sequence, 324 residues long: Cyclin-dependent kinase 1 (324 aa).

Positions Tyr-4–Phe-307 constitute a Protein kinase domain. ATP contacts are provided by residues Ile-10–Val-18 and Lys-34. At Thr-14 the chain carries Phosphothreonine. Tyr-15 carries the post-translational modification Phosphotyrosine. The Proton acceptor role is filled by Asp-148. At Thr-181 the chain carries Phosphothreonine; by CAK.

Belongs to the protein kinase superfamily. CMGC Ser/Thr protein kinase family. CDC2/CDKX subfamily. Forms a stable but non-covalent complex with a regulatory subunit (SUC1) and with a cyclin.

The catalysed reaction is L-seryl-[protein] + ATP = O-phospho-L-seryl-[protein] + ADP + H(+). It carries out the reaction L-threonyl-[protein] + ATP = O-phospho-L-threonyl-[protein] + ADP + H(+). With respect to regulation, phosphorylation at Thr-14 or Tyr-15 inactivates the enzyme, while phosphorylation at Thr-181 activates it. Functionally, cyclin-dependent kinase that acts as a master regulator of the mitotic and meiotic cell cycles. This is Cyclin-dependent kinase 1 from Ajellomyces capsulatus (Darling's disease fungus).